The sequence spans 107 residues: RADAAPTVSIFPPSSEQLTSGGASVVCFLNNFYPKDINVKWKIDGSERQNGVLNSWTDQDSKDSTYSMSSTLTLTKDEYERHNSYTCEATHKTSTSPIVKSFNRNEC.

One can recognise an Ig-like domain in the interval 6–103 (PTVSIFPPSS…STSPIVKSFN (98 aa)). Cys27 and Cys87 are disulfide-bonded.

The protein is Immunoglobulin kappa constant of Mus musculus (Mouse).